Consider the following 651-residue polypeptide: Acetyl-coenzyme A synthetase (651 aa).

Residues 189–192, threonine 311, and asparagine 335 each bind CoA; that span reads RGGK. ATP-binding positions include 387–389, 411–416, aspartate 500, and arginine 515; these read GEP and DTWWQT. Serine 523 is a CoA binding site. Residue arginine 526 participates in ATP binding. The Mg(2+) site is built by valine 537, histidine 539, and valine 542. Arginine 584 provides a ligand contact to CoA. Lysine 609 is subject to N6-acetyllysine.

This sequence belongs to the ATP-dependent AMP-binding enzyme family. The cofactor is Mg(2+). Acetylated. Deacetylation by the SIR2-homolog deacetylase activates the enzyme.

The enzyme catalyses acetate + ATP + CoA = acetyl-CoA + AMP + diphosphate. In terms of biological role, catalyzes the conversion of acetate into acetyl-CoA (AcCoA), an essential intermediate at the junction of anabolic and catabolic pathways. AcsA undergoes a two-step reaction. In the first half reaction, AcsA combines acetate with ATP to form acetyl-adenylate (AcAMP) intermediate. In the second half reaction, it can then transfer the acetyl group from AcAMP to the sulfhydryl group of CoA, forming the product AcCoA. This is Acetyl-coenzyme A synthetase from Rhizobium leguminosarum bv. trifolii (strain WSM2304).